The chain runs to 209 residues: Max dimerization protein 4 (209 aa).

Positions 6 to 23 (LLILLEAAEYLERRDREA) are interaction with SIN3A and SIN3B. Residues 53–105 (NNRSSHNELEKHRRAKLRLYLEQLKQLVPLGPDSTRHTTLSLLKRAKVHIKKL) enclose the bHLH domain. Residues 140–209 (RVRTDSTGSA…CRRLGRPALS (70 aa)) are disordered. Residues 153-163 (DDSEQEVDIEG) show a composition bias toward acidic residues. The segment covering 199–209 (HCRRLGRPALS) has biased composition (basic residues).

Efficient DNA binding requires dimerization with another bHLH protein. Binds DNA as a heterodimer with MAX. Interacts with SIN3A AND SIN3B. Interacts with RNF17.

It localises to the nucleus. Its function is as follows. Transcriptional repressor. Binds with MAX to form a sequence-specific DNA-binding protein complex which recognizes the core sequence 5'-CAC[GA]TG-3'. Antagonizes MYC transcriptional activity by competing for MAX and suppresses MYC dependent cell transformation. The protein is Max dimerization protein 4 (MXD4) of Homo sapiens (Human).